The sequence spans 309 residues: Homoserine O-succinyltransferase (309 aa).

The active-site Acyl-thioester intermediate is the cysteine 142. Residues lysine 163 and serine 192 each coordinate substrate. Catalysis depends on histidine 235, which acts as the Proton acceptor. Residue glutamate 237 is part of the active site. Arginine 249 contributes to the substrate binding site.

The protein belongs to the MetA family. As to quaternary structure, homodimer.

The protein resides in the cytoplasm. It catalyses the reaction L-homoserine + succinyl-CoA = O-succinyl-L-homoserine + CoA. It functions in the pathway amino-acid biosynthesis; L-methionine biosynthesis via de novo pathway; O-succinyl-L-homoserine from L-homoserine: step 1/1. Its function is as follows. Transfers a succinyl group from succinyl-CoA to L-homoserine, forming succinyl-L-homoserine. This is Homoserine O-succinyltransferase from Escherichia coli (strain ATCC 8739 / DSM 1576 / NBRC 3972 / NCIMB 8545 / WDCM 00012 / Crooks).